We begin with the raw amino-acid sequence, 126 residues long: Larval cuticle protein 2 (126 aa).

The N-terminal stretch at 1–16 (MFKFVMILAVVGVATA) is a signal peptide. Residues 39–100 (ADGFDSSLHT…PSGAWIPTPP (62 aa)) form the Chitin-binding type R&amp;R domain.

Functionally, component of the larval cuticle. This chain is Larval cuticle protein 2 (Lcp2), found in Drosophila melanogaster (Fruit fly).